The primary structure comprises 178 residues: Ribosome maturation factor RimM (178 aa).

The region spanning 100–178 (TDGEYYWYQL…EMKVEWDADF (79 aa)) is the PRC barrel domain.

The protein belongs to the RimM family. In terms of assembly, binds ribosomal protein uS19.

The protein localises to the cytoplasm. In terms of biological role, an accessory protein needed during the final step in the assembly of 30S ribosomal subunit, possibly for assembly of the head region. Essential for efficient processing of 16S rRNA. May be needed both before and after RbfA during the maturation of 16S rRNA. It has affinity for free ribosomal 30S subunits but not for 70S ribosomes. The protein is Ribosome maturation factor RimM of Pseudomonas fluorescens (strain SBW25).